The following is a 94-amino-acid chain: MFTINAEVRNEQGKGASRRLRTAGKFPAIVYGGSEAALSVTLDHDSTMNLSEKDGFYTDVLTLSVDGKEIKVKIQAVQRHPYKPKITHIDFVRA.

It belongs to the bacterial ribosomal protein bL25 family. In terms of assembly, part of the 50S ribosomal subunit; part of the 5S rRNA/L5/L18/L25 subcomplex. Contacts the 5S rRNA. Binds to the 5S rRNA independently of L5 and L18.

Functionally, this is one of the proteins that binds to the 5S RNA in the ribosome where it forms part of the central protuberance. The polypeptide is Large ribosomal subunit protein bL25 (Edwardsiella ictaluri (strain 93-146)).